The sequence spans 108 residues: Protein RnfH (108 aa).

Belongs to the UPF0125 (RnfH) family.

The chain is Protein RnfH from Laribacter hongkongensis (strain HLHK9).